The following is a 412-amino-acid chain: STAGA complex 65 subunit gamma (412 aa).

Residues 81 to 107 (AQTQSQQQTEGVKAEESEPLPSCPGSP) are disordered. S106 is modified (phosphoserine). K269 is covalently cross-linked (Glycyl lysine isopeptide (Lys-Gly) (interchain with G-Cter in SUMO2)). Residues S321 and S332 each carry the phosphoserine modification. A disordered region spans residues 364-412 (EEPMSGMSEAGLPQSPDDSDSSYGSHSTDSLMGSSPVFNQRCRKRMRKI). The segment covering 384–393 (SSYGSHSTDS) has biased composition (low complexity).

In terms of assembly, component of the STAGA transcription coactivator-HAT complex, at least composed of SUPT3H, SUPT7L, GCN5L2, TAF5L, TAF6L, TADA3L, TAD1L, TAF10, TAF12 and TAF9. Post-translationally, sumoylated.

The protein localises to the nucleus. This is STAGA complex 65 subunit gamma (Supt7l) from Mus musculus (Mouse).